We begin with the raw amino-acid sequence, 430 residues long: Glutamate-1-semialdehyde 2,1-aminomutase (430 aa).

Residue lysine 265 is modified to N6-(pyridoxal phosphate)lysine.

This sequence belongs to the class-III pyridoxal-phosphate-dependent aminotransferase family. HemL subfamily. The cofactor is pyridoxal 5'-phosphate.

The protein resides in the cytoplasm. It catalyses the reaction (S)-4-amino-5-oxopentanoate = 5-aminolevulinate. Its pathway is porphyrin-containing compound metabolism; protoporphyrin-IX biosynthesis; 5-aminolevulinate from L-glutamyl-tRNA(Glu): step 2/2. The protein is Glutamate-1-semialdehyde 2,1-aminomutase of Caldivirga maquilingensis (strain ATCC 700844 / DSM 13496 / JCM 10307 / IC-167).